Here is an 84-residue protein sequence, read N- to C-terminus: Toxin Tst1 (84 aa).

An N-terminal signal peptide occupies residues 1–19; it reads MKGMILFISCLLLIDIVVG. The LCN-type CS-alpha/beta domain occupies 21 to 82; it reads KEGYLMDHEG…VWDRATNKCG (62 aa). Disulfide bonds link C31/C81, C35/C57, C43/C62, and C47/C64. The residue at position 81 (C81) is a Cysteine amide.

In terms of tissue distribution, expressed by the venom gland.

It localises to the secreted. Beta toxins bind voltage-independently at site-4 of sodium channels (Nav) and shift the voltage of activation toward more negative potentials thereby affecting sodium channel activation and promoting spontaneous and repetitive firing. This toxin is active only on mammals. Is toxic to mice. The sequence is that of Toxin Tst1 from Tityus stigmurus (Brazilian scorpion).